A 464-amino-acid chain; its full sequence is 3-isopropylmalate dehydratase large subunit (464 aa).

Residues cysteine 345, cysteine 405, and cysteine 408 each contribute to the [4Fe-4S] cluster site.

This sequence belongs to the aconitase/IPM isomerase family. LeuC type 1 subfamily. In terms of assembly, heterodimer of LeuC and LeuD. Requires [4Fe-4S] cluster as cofactor.

The enzyme catalyses (2R,3S)-3-isopropylmalate = (2S)-2-isopropylmalate. It participates in amino-acid biosynthesis; L-leucine biosynthesis; L-leucine from 3-methyl-2-oxobutanoate: step 2/4. In terms of biological role, catalyzes the isomerization between 2-isopropylmalate and 3-isopropylmalate, via the formation of 2-isopropylmaleate. In Bacteroides thetaiotaomicron (strain ATCC 29148 / DSM 2079 / JCM 5827 / CCUG 10774 / NCTC 10582 / VPI-5482 / E50), this protein is 3-isopropylmalate dehydratase large subunit.